The following is a 321-amino-acid chain: Lactamase-like protein notP (321 aa).

Residues His108, His110, Asp112, and His113 each coordinate Zn(2+). Asp112 acts as the Proton donor/acceptor in catalysis.

Belongs to the metallo-beta-lactamase superfamily. The cofactor is Zn(2+).

Its function is as follows. Lactamase-like protein; part of the gene cluster that mediates the biosynthesis of notoamide, a fungal indole alkaloid that belongs to a family of natural products containing a characteristic bicyclo[2.2.2]diazaoctane core. The first step of notoamide biosynthesis involves coupling of L-proline and L-tryptophan by the bimodular NRPS notE, to produce cyclo-L-tryptophan-L-proline called brevianamide F. The reverse prenyltransferase notF then acts as a deoxybrevianamide E synthase and converts brevianamide F to deoxybrevianamide E via reverse prenylation at C-2 of the indole ring leading to the bicyclo[2.2.2]diazaoctane core. Deoxybrevianamide E is further hydroxylated at C-6 of the indole ring, likely catalyzed by the cytochrome P450 monooxygenase notG, to yield 6-hydroxy-deoxybrevianamide E. 6-hydroxy-deoxybrevianamide E is a specific substrate of the prenyltransferase notC for normal prenylation at C-7 to produce 6-hydroxy-7-prenyl-deoxybrevianamide, also called notoamide S. As the proposed pivotal branching point in notoamide biosynthesis, notoamide S can be diverted to notoamide E through an oxidative pyran ring closure putatively catalyzed by either notH cytochrome P450 monooxygenase or the notD FAD-linked oxidoreductase. This step would be followed by an indole 2,3-epoxidation-initiated pinacol-like rearrangement catalyzed by the notB FAD-dependent monooxygenase leading to the formation of notoamide C and notoamide D. On the other hand notoamide S is converted to notoamide T by notH (or notD), a bifunctional oxidase that also functions as the intramolecular Diels-Alderase responsible for generation of (+)-notoamide T. To generate antipodal (-)-notoaminide T, notH' (or notD') in Aspergillus versicolor is expected to catalyze a Diels-Alder reaction leading to the opposite stereochemistry. The remaining oxidoreductase notD (or notH) likely catalyzes the oxidative pyran ring formation to yield (+)-stephacidin A. The FAD-dependent monooxygenase notI is highly similar to notB and is predicted to catalyze a similar conversion from (+)-stephacidin A to (-)-notoamide B via the 2,3-epoxidation of (+)-stephacidin A followed by a pinacol-type rearrangement. Finally, it remains unclear which enzyme could be responsible for the final hydroxylation steps leading to notoamide A and sclerotiamide. The function of notP in the notoamide biosynthesis has not been determined yet. The polypeptide is Lactamase-like protein notP (Aspergillus sp. (strain MF297-2)).